An 804-amino-acid chain; its full sequence is Leucine--tRNA ligase (804 aa).

Positions 40-51 (PYPSGQGLHVGH) match the 'HIGH' region motif. A 'KMSKS' region motif is present at residues 576–580 (KMSKS). Lysine 579 provides a ligand contact to ATP.

Belongs to the class-I aminoacyl-tRNA synthetase family.

The protein resides in the cytoplasm. The enzyme catalyses tRNA(Leu) + L-leucine + ATP = L-leucyl-tRNA(Leu) + AMP + diphosphate. The polypeptide is Leucine--tRNA ligase (Oceanobacillus iheyensis (strain DSM 14371 / CIP 107618 / JCM 11309 / KCTC 3954 / HTE831)).